The primary structure comprises 67 residues: MLYPSIDNLLLKIDSKYSLVTVAAKRARYMQLENDKGVLPSYQSDKFVGKALEEIHAGKLVLQNDEK.

The protein belongs to the RNA polymerase subunit omega family. In terms of assembly, the RNAP catalytic core consists of 2 alpha, 1 beta, 1 beta' and 1 omega subunit. When a sigma factor is associated with the core the holoenzyme is formed, which can initiate transcription.

The enzyme catalyses RNA(n) + a ribonucleoside 5'-triphosphate = RNA(n+1) + diphosphate. Promotes RNA polymerase assembly. Latches the N- and C-terminal regions of the beta' subunit thereby facilitating its interaction with the beta and alpha subunits. The sequence is that of DNA-directed RNA polymerase subunit omega from Listeria innocua serovar 6a (strain ATCC BAA-680 / CLIP 11262).